A 326-amino-acid polypeptide reads, in one-letter code: 4-hydroxythreonine-4-phosphate dehydrogenase (326 aa).

Residues histidine 133 and threonine 134 each contribute to the substrate site. Positions 163, 208, and 263 each coordinate a divalent metal cation. Substrate contacts are provided by lysine 271, asparagine 280, and arginine 289.

It belongs to the PdxA family. In terms of assembly, homodimer. It depends on Zn(2+) as a cofactor. The cofactor is Mg(2+). Co(2+) is required as a cofactor.

The protein localises to the cytoplasm. It carries out the reaction 4-(phosphooxy)-L-threonine + NAD(+) = 3-amino-2-oxopropyl phosphate + CO2 + NADH. It participates in cofactor biosynthesis; pyridoxine 5'-phosphate biosynthesis; pyridoxine 5'-phosphate from D-erythrose 4-phosphate: step 4/5. Functionally, catalyzes the NAD(P)-dependent oxidation of 4-(phosphooxy)-L-threonine (HTP) into 2-amino-3-oxo-4-(phosphooxy)butyric acid which spontaneously decarboxylates to form 3-amino-2-oxopropyl phosphate (AHAP). The protein is 4-hydroxythreonine-4-phosphate dehydrogenase of Pseudoalteromonas atlantica (strain T6c / ATCC BAA-1087).